Here is a 449-residue protein sequence, read N- to C-terminus: Exodeoxyribonuclease 7 large subunit (449 aa).

It belongs to the XseA family. Heterooligomer composed of large and small subunits.

The protein localises to the cytoplasm. It carries out the reaction Exonucleolytic cleavage in either 5'- to 3'- or 3'- to 5'-direction to yield nucleoside 5'-phosphates.. In terms of biological role, bidirectionally degrades single-stranded DNA into large acid-insoluble oligonucleotides, which are then degraded further into small acid-soluble oligonucleotides. The sequence is that of Exodeoxyribonuclease 7 large subunit from Lacticaseibacillus casei (strain BL23) (Lactobacillus casei).